A 556-amino-acid polypeptide reads, in one-letter code: 2-succinyl-5-enolpyruvyl-6-hydroxy-3-cyclohexene-1-carboxylate synthase (556 aa).

This sequence belongs to the TPP enzyme family. MenD subfamily. Homodimer. Mg(2+) is required as a cofactor. Requires Mn(2+) as cofactor. Thiamine diphosphate serves as cofactor.

It carries out the reaction isochorismate + 2-oxoglutarate + H(+) = 5-enolpyruvoyl-6-hydroxy-2-succinyl-cyclohex-3-ene-1-carboxylate + CO2. The protein operates within quinol/quinone metabolism; 1,4-dihydroxy-2-naphthoate biosynthesis; 1,4-dihydroxy-2-naphthoate from chorismate: step 2/7. It participates in quinol/quinone metabolism; menaquinone biosynthesis. Functionally, catalyzes the thiamine diphosphate-dependent decarboxylation of 2-oxoglutarate and the subsequent addition of the resulting succinic semialdehyde-thiamine pyrophosphate anion to isochorismate to yield 2-succinyl-5-enolpyruvyl-6-hydroxy-3-cyclohexene-1-carboxylate (SEPHCHC). In Escherichia fergusonii (strain ATCC 35469 / DSM 13698 / CCUG 18766 / IAM 14443 / JCM 21226 / LMG 7866 / NBRC 102419 / NCTC 12128 / CDC 0568-73), this protein is 2-succinyl-5-enolpyruvyl-6-hydroxy-3-cyclohexene-1-carboxylate synthase.